Reading from the N-terminus, the 864-residue chain is Carbohydrate-responsive element-binding protein (864 aa).

Disordered stretches follow at residues 15 to 41 (PRVV…AGGL) and 53 to 77 (MVSS…LADF). Phosphoserine is present on residues Ser-20, Ser-23, and Ser-25. Thr-27 is modified (phosphothreonine). Ser-196 carries the post-translational modification Phosphoserine. Disordered regions lie at residues 332–397 (SSGI…APGP), 449–468 (PGVS…QPGP), 489–533 (PHFT…TARD), 547–570 (PEQA…PQDT), and 583–602 (PIPA…LAPP). The span at 351 to 368 (GMTPHSGNTRLQARNSCS) shows a compositional bias: polar residues. Residues 513–531 (ASPPTLASATASPTATATA) show a composition bias toward low complexity. Phosphoserine; by AMPK is present on Ser-566. Residues 583-596 (PIPAPTPPRPPPGP) are compositionally biased toward pro residues. Phosphoserine is present on residues Ser-614, Ser-626, and Ser-643. One can recognise a bHLH domain in the interval 661–715 (NRRITHISAEQKRRFNIKLGFDTLHGLVSTLSAQPSLKVSKATTLQKTAEYILML). Residues 715–736 (LQQERAAMQEEAQQLRDEIEEL) are leucine-zipper.

As to quaternary structure, binds DNA as a heterodimer with TCFL4/MLX. Post-translationally, phosphorylation at Ser-566 by AMPK inactivates the DNA-binding activity. In terms of tissue distribution, expressed in the ventricular and intermediate zones of the developing spinal cord of 12.5 dpc embryos. In later embryos expressed in a variety of tissues.

The protein resides in the nucleus. Its function is as follows. Transcriptional repressor. Binds to the canonical and non-canonical E box sequences 5'-CACGTG-3'. The sequence is that of Carbohydrate-responsive element-binding protein (Mlxipl) from Mus musculus (Mouse).